A 258-amino-acid chain; its full sequence is Acyl-[acyl-carrier-protein]--UDP-N-acetylglucosamine O-acyltransferase (258 aa).

The protein belongs to the transferase hexapeptide repeat family. LpxA subfamily. In terms of assembly, homotrimer.

The protein resides in the cytoplasm. It catalyses the reaction a (3R)-hydroxyacyl-[ACP] + UDP-N-acetyl-alpha-D-glucosamine = a UDP-3-O-[(3R)-3-hydroxyacyl]-N-acetyl-alpha-D-glucosamine + holo-[ACP]. It functions in the pathway glycolipid biosynthesis; lipid IV(A) biosynthesis; lipid IV(A) from (3R)-3-hydroxytetradecanoyl-[acyl-carrier-protein] and UDP-N-acetyl-alpha-D-glucosamine: step 1/6. Its function is as follows. Involved in the biosynthesis of lipid A, a phosphorylated glycolipid that anchors the lipopolysaccharide to the outer membrane of the cell. This Pseudomonas putida (strain ATCC 47054 / DSM 6125 / CFBP 8728 / NCIMB 11950 / KT2440) protein is Acyl-[acyl-carrier-protein]--UDP-N-acetylglucosamine O-acyltransferase.